The sequence spans 99 residues: MAVNPLDFLKNMSNFKDNIDNIKKEISQIVVCGRAGSDVVVVEMNGEFVVKKILIKEDFFNDLDNEALEHMIKSAFNDAVFKVKEEIKSKTMGSIPFGI.

The protein belongs to the YbaB/EbfC family. As to quaternary structure, homodimer.

The protein localises to the cytoplasm. Its subcellular location is the nucleoid. In terms of biological role, binds to DNA and alters its conformation. May be involved in regulation of gene expression, nucleoid organization and DNA protection. The chain is Nucleoid-associated protein EbfC from Borrelia duttonii (strain Ly).